Here is a 359-residue protein sequence, read N- to C-terminus: Peptide chain release factor 1 (359 aa).

Q235 carries the post-translational modification N5-methylglutamine. The interval R282–I306 is disordered.

Belongs to the prokaryotic/mitochondrial release factor family. In terms of processing, methylated by PrmC. Methylation increases the termination efficiency of RF1.

It localises to the cytoplasm. Peptide chain release factor 1 directs the termination of translation in response to the peptide chain termination codons UAG and UAA. The protein is Peptide chain release factor 1 of Rhizobium rhizogenes (strain K84 / ATCC BAA-868) (Agrobacterium radiobacter).